The chain runs to 458 residues: MKATKGRNVVVVGTQWGDEGKGKLVDWLTESAQGVVRFQGGHNAGHTLVINGVKTALHLIPSGIMRPGVKCYIGNGVVLSAAKLFEEIEGLEKAGVQVRDRLRVSEACPLILPFHSALDVAREAAREQGGTEKIGTTGRGIGPAYEDKIARRALRVQDLKYPERFATKLRELLALHNHILVNVLGSKNFTFGDALKPYIKDGEVQFDAVYEEAMRHAELLKPMMADVSRELNAAHAEGANLLFEGAQGTLLDVDHGTYPYVTSSNCVAGNAAAGSGVGPGMLHYILGITKAYCTRVGGGPFPTELDWEKEGTPGWHMSTVGAEKGVTTGRSRRCGWFDAALLKRSAQVNGLSGLCITKLDVLDGLQELLLCVGYELDGEKIDLLPMGADEIARCKPIYESIPGWTDSTVGVTDYDKLPANARRYLERIEEVTGVPIAMVSTSPDRDHTILMQNPYAAQ.

GTP contacts are provided by residues 17-23 (GDEGKGK) and 45-47 (GHT). Asp18 functions as the Proton acceptor in the catalytic mechanism. Mg(2+) is bound by residues Asp18 and Gly45. IMP-binding positions include 18-21 (DEGK), 43-46 (NAGH), Thr137, Arg151, Gln247, Thr262, and Arg330. The active-site Proton donor is the His46. A substrate-binding site is contributed by 326 to 332 (VTTGRSR). GTP contacts are provided by residues Arg332, 358-360 (KLD), and 440-442 (STS).

This sequence belongs to the adenylosuccinate synthetase family. As to quaternary structure, homodimer. Mg(2+) is required as a cofactor.

Its subcellular location is the cytoplasm. The catalysed reaction is IMP + L-aspartate + GTP = N(6)-(1,2-dicarboxyethyl)-AMP + GDP + phosphate + 2 H(+). Its pathway is purine metabolism; AMP biosynthesis via de novo pathway; AMP from IMP: step 1/2. Its function is as follows. Plays an important role in the de novo pathway of purine nucleotide biosynthesis. Catalyzes the first committed step in the biosynthesis of AMP from IMP. In Delftia acidovorans (strain DSM 14801 / SPH-1), this protein is Adenylosuccinate synthetase.